The following is a 388-amino-acid chain: Sulfate adenylyltransferase (388 aa).

It belongs to the sulfate adenylyltransferase family.

It catalyses the reaction sulfate + ATP + H(+) = adenosine 5'-phosphosulfate + diphosphate. The protein operates within sulfur metabolism; hydrogen sulfide biosynthesis; sulfite from sulfate: step 1/3. The protein is Sulfate adenylyltransferase of Trichodesmium erythraeum (strain IMS101).